The chain runs to 866 residues: MGAARSPPSAVPGPLLGLLLLLLGVLAPGGASLRLLDHRALVCSQPGLNCTVKNSTCLDDSWIHPRNLTPSSPKDLQIQLHFAHTQQGDLFPVAHIEWTLQTDASILYLEGAELSVLQLNTNERLCVRFEFLSKLRHHHRRWRFTFSHFVVDPDQEYEVTVHHLPKPIPDGDPNHQSKNFLVPDCEHARMKVTTPCMSSGSLWDPNITVETLEAHQLRVSFTLWNESTHYQILLTSFPHMENHSCFEHMHHIPAPRPEEFHQRSNVTLTLRNLKGCCRHQVQIQPFFSSCLNDCLRHSATVSCPEMPDTPEPIPDYMPLWVYWFITGISILLVGSVILLIVCMTWRLAGPGSEKYSDDTKYTDGLPAADLIPPPLKPRKVWIIYSADHPLYVDVVLKFAQFLLTACGTEVALDLLEEQAISEAGVMTWVGRQKQEMVESNSKIIVLCSRGTRAKWQALLGRGAPVRLRCDHGKPVGDLFTAAMNMILPDFKRPACFGTYVVCYFSEVSCDGDVPDLFGAAPRYPLMDRFEEVYFRIQDLEMFQPGRMHRVGELSGDNYLRSPGGRQLRAALDRFRDWQVRCPDWFECENLYSADDQDAPSLDEEVFEEPLLPPGTGIVKRAPLVREPGSQACLAIDPLVGEEGGAAVAKLEPHLQPRGQPAPQPLHTLVLAAEEGALVAAVEPGPLADGAAVRLALAGEGEACPLLGSPGAGRNSVLFLPVDPEDSPLGSSTPMASPDLLPEDVREHLEGLMLSLFEQSLSCQAQGGCSRPAMVLTDPHTPYEEEQRQSVQSDQGYISRSSPQPPEGLTEMEEEEEEEQDPGKPALPLSPEDLESLRSLQRQLLFRQLQKNSGWDTMGSESEGPSA.

The N-terminal stretch at 1-32 (MGAARSPPSAVPGPLLGLLLLLLGVLAPGGAS) is a signal peptide. Residues 33-320 (LRLLDHRALV…EPIPDYMPLW (288 aa)) are Extracellular-facing. Residues C43 and C50 are joined by a disulfide bond. N-linked (GlcNAc...) asparagine glycans are attached at residues N49, N54, and N67. Intrachain disulfides connect C57-C126 and C185-C196. N206, N225, N242, and N265 each carry an N-linked (GlcNAc...) asparagine glycan. 3 disulfides stabilise this stretch: C245-C276, C277-C303, and C290-C294. A helical transmembrane segment spans residues 321–341 (VYWFITGISILLVGSVILLIV). The Cytoplasmic portion of the chain corresponds to 342–866 (CMTWRLAGPG…MGSESEGPSA (525 aa)). The region spanning 377–534 (PRKVWIIYSA…LMDRFEEVYF (158 aa)) is the SEFIR domain. Phosphoserine is present on residues S708 and S736. Disordered regions lie at residues 717–736 (LFLPVDPEDSPLGSSTPMAS) and 773–840 (MVLT…RSLQ). A compositionally biased stretch (polar residues) spans 788–801 (QSVQSDQGYISRSS). Over residues 809–819 (TEMEEEEEEEQ) the composition is skewed to acidic residues.

As to quaternary structure, forms heterodimers with IL17RC; the heterodimer binds IL17A and IL17F homodimers as well as the heterodimer formed by IL17A and IL17F. Forms complexes with 2:1 binding stoichiometry: two receptor chains for one interleukin molecule. IL17A homodimer preferentially drives the formation of IL17RA-IL17RC heterodimeric receptor complex, whereas IL17F homodimer forms predominantly complexes with IL17RC homodimer. IL17A homodimer adopts an asymmetrical ternary structure with one IL17RA molecule, allowing for high affinity interactions of one IL17A monomer with one IL17RA molecule (via D1 and D2 domains), while disfavoring binding of a second IL17RA molecule on the other IL17A monomer. IL17A-IL17F forms complexes with IL17RA-IL17RC, but with lower affinity when compared to IL17A homodimer. IL17RA chain cannot distinguish between IL17A and IL17F molecules, potentially enabling the formation of topologically distinct complexes. Interacts with TRAF3IP2. Forms heterodimers with IL17RE; the heterodimer binds IL17C. (Microbial infection) Interacts with SARS coronavirus-2/SARS-CoV-2 virus protein ORF8. In terms of processing, glycosylated. As to expression, widely expressed.

It localises to the cell membrane. The protein localises to the secreted. Functionally, receptor for IL17A and IL17F, major effector cytokines of innate and adaptive immune system involved in antimicrobial host defense and maintenance of tissue integrity. Receptor for IL17A. Receptor for IL17F. Binds to IL17A with higher affinity than to IL17F. Binds IL17A and IL17F homodimers as part of a heterodimeric complex with IL17RC. Also binds heterodimers formed by IL17A and IL17F as part of a heterodimeric complex with IL17RC. Cytokine binding triggers homotypic interaction of IL17RA and IL17RC chains with TRAF3IP2 adapter, leading to TRAF6-mediated activation of NF-kappa-B and MAPkinase pathways, ultimately resulting in transcriptional activation of cytokines, chemokines, antimicrobial peptides and matrix metalloproteinases, with potential strong immune inflammation. Involved in antimicrobial host defense primarily promoting neutrophil activation and recruitment at infection sites to destroy extracellular bacteria and fungi. In secondary lymphoid organs, contributes to germinal center formation by regulating the chemotactic response of B cells to CXCL12 and CXCL13, enhancing retention of B cells within the germinal centers, B cell somatic hypermutation rate and selection toward plasma cells. Plays a role in the maintenance of the integrity of epithelial barriers during homeostasis and pathogen infection. Stimulates the production of antimicrobial beta-defensins DEFB1, DEFB103A, and DEFB104A by mucosal epithelial cells, limiting the entry of microbes through the epithelial barriers. Involved in antiviral host defense through various mechanisms. Enhances immunity against West Nile virus by promoting T cell cytotoxicity. Contributes to Influenza virus clearance by driving the differentiation of B-1a B cells, providing for production of virus-specific IgM antibodies at first line of host defense. Receptor for IL17C as part of a heterodimeric complex with IL17RE. In terms of biological role, (Microbial infection) Receptor for SARS coronavirus-2/SARS-CoV-2 virus protein ORF8, leading to IL17 pathway activation and an increased secretion of pro-inflammatory factors through activating NF-kappa-B signaling pathway. In Homo sapiens (Human), this protein is Interleukin-17 receptor A.